Reading from the N-terminus, the 66-residue chain is Large ribosomal subunit protein uL29 (66 aa).

Belongs to the universal ribosomal protein uL29 family. In terms of assembly, part of the 50S ribosomal subunit.

The protein is Large ribosomal subunit protein uL29 (rpmC) of Bacillus subtilis (strain 168).